We begin with the raw amino-acid sequence, 135 residues long: Sex-regulated protein janus-A (135 aa).

K37 provides a ligand contact to substrate. The Proton acceptor role is filled by H63. Residue 104–106 coordinates substrate; that stretch reads SQG.

Belongs to the janus family.

Its function is as follows. JanA and janB regulate somatic sex differentiation. This Drosophila erecta (Fruit fly) protein is Sex-regulated protein janus-A (janA).